The primary structure comprises 187 residues: Casparian strip membrane protein 5 (187 aa).

At 1 to 24 (MKSGQAEIMETSKGIQKSGLMSRR) the chain is on the cytoplasmic side. The chain crosses the membrane as a helical span at residues 25–45 (IAILEFILRIVAFFNTIGSAI). Residues 46–74 (LMGTTHETLPFFTQFIRFQAEYNDLPALT) lie on the Extracellular side of the membrane. The helical transmembrane segment at 75-95 (FFVVANAVVSGYLILSLTLAF) threads the bilayer. Topologically, residues 96 to 107 (VHIVKRKTQNTR) are cytoplasmic. Residues 108–128 (ILLIILDVAMLGLLTSGASSA) form a helical membrane-spanning segment. Residues 129 to 161 (AAIVYLAHNGNNKTNWFAICQQFNSFCERISGS) lie on the Extracellular side of the membrane. N-linked (GlcNAc...) asparagine glycosylation is present at Asn140. Residues 162–182 (LIGSFIAIVLLILLILLSAIA) traverse the membrane as a helical segment. At 183-187 (LSRRH) the chain is on the cytoplasmic side.

Belongs to the Casparian strip membrane proteins (CASP) family. Homodimer and heterodimers with other CASP proteins. Interacts with CASP1, CASP3 and CASP4.

It is found in the cell membrane. Regulates membrane-cell wall junctions and localized cell wall deposition. Required for establishment of the Casparian strip membrane domain (CSD) and the subsequent formation of Casparian strips, a cell wall modification of the root endodermis that determines an apoplastic barrier between the intraorganismal apoplasm and the extraorganismal apoplasm and prevents lateral diffusion. In Arabidopsis thaliana (Mouse-ear cress), this protein is Casparian strip membrane protein 5 (CASP5).